A 493-amino-acid polypeptide reads, in one-letter code: Calcium-binding tyrosine phosphorylation-regulated protein (493 aa).

The 38-residue stretch at 12 to 49 (YGLKTLLEGISRAVLKTNPSNINQFAAAYFQELTMYRG) folds into the RIIa domain. Disordered stretches follow at residues 85–164 (EPGK…VSPE), 244–271 (DLGS…QEPP), 330–354 (NEQS…TTSG), and 426–493 (IVSD…STAE). Polar residues predominate over residues 90 to 100 (SVESKVPTQME). Basic and acidic residues predominate over residues 101–117 (KSTDTDEDNVTRTEYSD). Positions 141–152 (SSKPATPKTTTP) are enriched in low complexity. T151 is subject to Phosphothreonine. Phosphoserine is present on S155. 2 stretches are compositionally biased toward polar residues: residues 426–442 (IVSD…NSVP) and 461–470 (SGTSVKSSSG). Over residues 484–493 (IEPEGESTAE) the composition is skewed to acidic residues.

In terms of assembly, interacts with FSCB. Isoform 3 self-associates. Isoform 3 and isoform 5 interact with GSK3B. Isoform 1 does not interact with GSK3B. Post-translationally, isoform 1 is phosphorylated on tyrosine residues during in vitro capacitation. Isoform 3 and isoform 5 are phosphorylated by GSK3B in vitro. Dephosphorylation affects its ability to bind calcium. In terms of tissue distribution, expressed in elongating spermatids and spermatozoa (at protein level). Isoform 1 is expressed in testis. Isoform 3 and isoform 5 are also expressed in brain, pancreas and numerous brain tumors.

It localises to the cytoplasm. The protein resides in the cytoskeleton. The protein localises to the cell projection. It is found in the cilium. Its subcellular location is the flagellum. It localises to the nucleus. In terms of biological role, may function as a regulator of both motility- and head-associated functions such as capacitation and the acrosome reaction. Isoform 1 binds calcium in vitro. Isoform 2 and isoform 6 probably bind calcium. Isoform 3 and isoform 5 do not bind calcium in vitro. Isoform 4 probably does not bind calcium. The protein is Calcium-binding tyrosine phosphorylation-regulated protein (CABYR) of Homo sapiens (Human).